Here is a 177-residue protein sequence, read N- to C-terminus: Large ribosomal subunit protein uL6 (177 aa).

Belongs to the universal ribosomal protein uL6 family. In terms of assembly, part of the 50S ribosomal subunit.

Its function is as follows. This protein binds to the 23S rRNA, and is important in its secondary structure. It is located near the subunit interface in the base of the L7/L12 stalk, and near the tRNA binding site of the peptidyltransferase center. This Yersinia enterocolitica serotype O:8 / biotype 1B (strain NCTC 13174 / 8081) protein is Large ribosomal subunit protein uL6.